Consider the following 108-residue polypeptide: Nucleoid-associated protein PLES_37951 (108 aa).

Disordered regions lie at residues 1–25 (MMKG…KMQE) and 87–108 (NQEK…KMPF). The span at 87-98 (NQEKMSGFTSGM) shows a compositional bias: polar residues.

The protein belongs to the YbaB/EbfC family. As to quaternary structure, homodimer.

It is found in the cytoplasm. The protein localises to the nucleoid. Its function is as follows. Binds to DNA and alters its conformation. May be involved in regulation of gene expression, nucleoid organization and DNA protection. This Pseudomonas aeruginosa (strain LESB58) protein is Nucleoid-associated protein PLES_37951.